Here is a 98-residue protein sequence, read N- to C-terminus: NADH-ubiquinone oxidoreductase chain 4L (98 aa).

3 helical membrane passes run 1-21, 25-45, and 57-79; these read MLAI…GVLV, HLMS…ILMT, and SMAP…ALLV.

The protein belongs to the complex I subunit 4L family. As to quaternary structure, core subunit of respiratory chain NADH dehydrogenase (Complex I) which is composed of 45 different subunits.

Its subcellular location is the mitochondrion inner membrane. The enzyme catalyses a ubiquinone + NADH + 5 H(+)(in) = a ubiquinol + NAD(+) + 4 H(+)(out). In terms of biological role, core subunit of the mitochondrial membrane respiratory chain NADH dehydrogenase (Complex I) which catalyzes electron transfer from NADH through the respiratory chain, using ubiquinone as an electron acceptor. Part of the enzyme membrane arm which is embedded in the lipid bilayer and involved in proton translocation. This Dasyurus hallucatus (Northern quoll) protein is NADH-ubiquinone oxidoreductase chain 4L (MT-ND4L).